The primary structure comprises 308 residues: uncharacterized protein (308 aa).

Residue Glu-59 is part of the active site.

Belongs to the PhzF family.

This is an uncharacterized protein from Deinococcus radiodurans (strain ATCC 13939 / DSM 20539 / JCM 16871 / CCUG 27074 / LMG 4051 / NBRC 15346 / NCIMB 9279 / VKM B-1422 / R1).